Reading from the N-terminus, the 131-residue chain is Plastocyanin (131 aa).

Positions 1-34 (MKFFASLSKRFAPVLSLVVLVAGTLLLSAAPASA) are cleaved as a signal peptide. The Plastocyanin-like domain occupies 35-131 (ATVQIKMGTD…AGMVGTITVE (97 aa)). Residues His-73, Cys-116, His-119, and Met-124 each coordinate Cu cation.

The protein belongs to the plastocyanin family. The cofactor is Cu(2+).

The protein resides in the cellular thylakoid membrane. Participates in electron transfer between P700 and the cytochrome b6-f complex in photosystem I. The chain is Plastocyanin (petE) from Prochlorothrix hollandica.